We begin with the raw amino-acid sequence, 500 residues long: Lysine--tRNA ligase (500 aa).

Glu410 and Glu417 together coordinate Mg(2+).

Belongs to the class-II aminoacyl-tRNA synthetase family. Homodimer. It depends on Mg(2+) as a cofactor.

It localises to the cytoplasm. The enzyme catalyses tRNA(Lys) + L-lysine + ATP = L-lysyl-tRNA(Lys) + AMP + diphosphate. The chain is Lysine--tRNA ligase from Pseudomonas entomophila (strain L48).